Here is a 350-residue protein sequence, read N- to C-terminus: Casein kinase II subunit alpha' (350 aa).

A Phosphotyrosine modification is found at Tyr-13. A phosphoserine mark is found at Ser-18 and Ser-21. In terms of domain architecture, Protein kinase spans 40-325; the sequence is YQLVRKLGRG…AKEAMEHPYF (286 aa). ATP is bound by residues 46-54 and Lys-69; that span reads LGRGKYSEV. Lys-97 bears the N6-acetyllysine mark. Catalysis depends on Asp-157, which acts as the Proton acceptor. Ser-288 bears the Phosphoserine mark.

This sequence belongs to the protein kinase superfamily. Ser/Thr protein kinase family. CK2 subfamily. In terms of assembly, heterotetramer composed of two catalytic subunits (alpha chain and/or alpha' chain) and two regulatory subunits (beta chains). The tetramer can exist as a combination of 2 alpha/2 beta, 2 alpha'/2 beta or 1 alpha/1 alpha'/2 beta subunits. Also part of a CK2-SPT16-SSRP1 complex composed of SSRP1, SUPT16H, CSNK2A1, CSNK2A2 and CSNK2B, which forms following UV irradiation. Interacts with RNPS1. Interacts with CSNK2A2IP (via C-terminus). Interacts with SIRT6; preventing CSNK2A2 localization to the nucleus. Interacts with HIRIP3. In terms of tissue distribution, highly expressed in brain, testis and mature epididymal spermatozoa. Weakly expressed in kidney, liver, lung, spleen and thymus (at protein level).

It is found in the nucleus. The protein resides in the cytoplasm. The enzyme catalyses L-seryl-[protein] + ATP = O-phospho-L-seryl-[protein] + ADP + H(+). The catalysed reaction is L-threonyl-[protein] + ATP = O-phospho-L-threonyl-[protein] + ADP + H(+). With respect to regulation, constitutively active protein kinase whose activity is not directly affected by phosphorylation. Seems to be regulated by level of expression and localization. Functionally, catalytic subunit of a constitutively active serine/threonine-protein kinase complex that phosphorylates a large number of substrates containing acidic residues C-terminal to the phosphorylated serine or threonine. Regulates numerous cellular processes, such as cell cycle progression, apoptosis and transcription, as well as viral infection. May act as a regulatory node which integrates and coordinates numerous signals leading to an appropriate cellular response. During mitosis, functions as a component of the p53/TP53-dependent spindle assembly checkpoint (SAC) that maintains cyclin-B-CDK1 activity and G2 arrest in response to spindle damage. Also required for p53/TP53-mediated apoptosis, phosphorylating 'Ser-392' of p53/TP53 following UV irradiation. Phosphorylates a number of DNA repair proteins in response to DNA damage, such as MDC1, RAD9A, RAD51 and HTATSF1, promoting their recruitment to DNA damage sites. Can also negatively regulate apoptosis. Phosphorylates the caspases CASP9 and CASP2 and the apoptotic regulator NOL3. Phosphorylation protects CASP9 from cleavage and activation by CASP8, and inhibits the dimerization of CASP2 and activation of CASP8. Regulates transcription by direct phosphorylation of RNA polymerases I, II, III and IV. Also phosphorylates and regulates numerous transcription factors including NF-kappa-B, STAT1, CREB1, IRF1, IRF2, ATF1, SRF, MAX, JUN, FOS, MYC and MYB. Phosphorylates Hsp90 and its co-chaperones FKBP4 and CDC37, which is essential for chaperone function. Regulates Wnt signaling by phosphorylating CTNNB1 and the transcription factor LEF1. Acts as an ectokinase that phosphorylates several extracellular proteins. May phosphorylate histone H2A on 'Ser-1'. The protein is Casein kinase II subunit alpha' (Csnk2a2) of Mus musculus (Mouse).